The sequence spans 348 residues: Fructose-1,6-bisphosphatase class 1 (348 aa).

Positions 104, 126, 128, and 129 each coordinate Mg(2+). Substrate is bound by residues Asp-129–Ser-132, Asn-221, Tyr-249, and Lys-279. Glu-285 is a binding site for Mg(2+).

It belongs to the FBPase class 1 family. As to quaternary structure, homotetramer. Mg(2+) is required as a cofactor.

It localises to the cytoplasm. The enzyme catalyses beta-D-fructose 1,6-bisphosphate + H2O = beta-D-fructose 6-phosphate + phosphate. Its pathway is carbohydrate biosynthesis; Calvin cycle. This is Fructose-1,6-bisphosphatase class 1 from Thermosynechococcus vestitus (strain NIES-2133 / IAM M-273 / BP-1).